The chain runs to 247 residues: Fibroblast growth factor 14 (247 aa).

2 disordered regions span residues 1-38 (MAAA…KNRG) and 214-247 (VGET…SKTT). Basic and acidic residues predominate over residues 15–25 (QAREQHWDRPS).

This sequence belongs to the heparin-binding growth factors family. As to quaternary structure, interacts with SCN8A. In terms of tissue distribution, nervous system.

The protein localises to the nucleus. Functionally, probably involved in nervous system development and function. The chain is Fibroblast growth factor 14 (FGF14) from Homo sapiens (Human).